Reading from the N-terminus, the 541-residue chain is Arginine--tRNA ligase (541 aa).

The short motif at 119 to 129 is the 'HIGH' region element; it reads ANPTGPLHIGH.

It belongs to the class-I aminoacyl-tRNA synthetase family. As to quaternary structure, monomer.

It is found in the cytoplasm. The enzyme catalyses tRNA(Arg) + L-arginine + ATP = L-arginyl-tRNA(Arg) + AMP + diphosphate. The sequence is that of Arginine--tRNA ligase from Helicobacter pylori (strain Shi470).